A 183-amino-acid polypeptide reads, in one-letter code: Large ribosomal subunit protein uL6 (183 aa).

Belongs to the universal ribosomal protein uL6 family. In terms of assembly, part of the 50S ribosomal subunit.

This protein binds to the 23S rRNA, and is important in its secondary structure. It is located near the subunit interface in the base of the L7/L12 stalk, and near the tRNA binding site of the peptidyltransferase center. The sequence is that of Large ribosomal subunit protein uL6 from Mycoplasmoides gallisepticum (strain R(low / passage 15 / clone 2)) (Mycoplasma gallisepticum).